A 314-amino-acid polypeptide reads, in one-letter code: MSKGKSKYVIDPISVKTACTSEESYIRCVEYGKGKAHYPNLSLLAKAILAGVFVGVCAHASGIAGGHFYYHKLREYVGISMSAFVYGFTFPIAFLCIIATGSDLFTGNTLAVTTALLQRKVSLLQYLRVMSISLFGNYLGAVSFAFFVSHLSGAYEKHTDVTKNHIFQFLNDIAEKKISHTFIQCICLAIGCNIFVCLAVYFVLTIKDGSGMVFSVFFAVYAFAIAGYEHIIANMYTLNLALMVEAKVTWSKVYFHNLLPTLIGNYIAGALVLACPLFYIYRNSYRDYERTRGDGSNCGLRSLSIEMQNGSNGN.

The Cytoplasmic segment spans residues 1–47 (MSKGKSKYVIDPISVKTACTSEESYIRCVEYGKGKAHYPNLSLLAKA). A helical transmembrane segment spans residues 48–68 (ILAGVFVGVCAHASGIAGGHF). Residues 69 to 78 (YYHKLREYVG) are Extracellular-facing. A helical membrane pass occupies residues 79–99 (ISMSAFVYGFTFPIAFLCIIA). Residues 100–128 (TGSDLFTGNTLAVTTALLQRKVSLLQYLR) are Cytoplasmic-facing. A helical transmembrane segment spans residues 129-149 (VMSISLFGNYLGAVSFAFFVS). At 150–185 (HLSGAYEKHTDVTKNHIFQFLNDIAEKKISHTFIQC) the chain is on the extracellular side. A helical membrane pass occupies residues 186 to 206 (ICLAIGCNIFVCLAVYFVLTI). Residues 207-211 (KDGSG) lie on the Cytoplasmic side of the membrane. Residues 212-232 (MVFSVFFAVYAFAIAGYEHII) traverse the membrane as a helical segment. Residues 233–257 (ANMYTLNLALMVEAKVTWSKVYFHN) lie on the Extracellular side of the membrane. The helical transmembrane segment at 258–278 (LLPTLIGNYIAGALVLACPLF) threads the bilayer. Residues 279 to 314 (YIYRNSYRDYERTRGDGSNCGLRSLSIEMQNGSNGN) lie on the Cytoplasmic side of the membrane.

It belongs to the FNT transporter (TC 1.A.16) family. In terms of assembly, homopentamer.

It localises to the cell membrane. Its subcellular location is the vacuole membrane. It catalyses the reaction (S)-lactate(in) + H(+)(in) = (S)-lactate(out) + H(+)(out). It carries out the reaction formate(in) + H(+)(in) = formate(out) + H(+)(out). The catalysed reaction is pyruvate(out) + H(+)(out) = pyruvate(in) + H(+)(in). The enzyme catalyses acetate(out) + H(+)(out) = acetate(in) + H(+)(in). Its activity is regulated as follows. Inhibited by the Malaria Box compound MMV007839 and its derivatives BH296 and BH267.meta. Functionally, monocarboxylate-proton symporter that mediates the efflux of the waste product lactate in the intraerythrocytic parasites; active in acidic-to-neutral pH range. Transports L-lactate. This Plasmodium knowlesi (strain H) protein is Formate-nitrite transporter.